A 157-amino-acid polypeptide reads, in one-letter code: Small ribosomal subunit protein uS7 (157 aa).

The protein belongs to the universal ribosomal protein uS7 family. As to quaternary structure, part of the 30S ribosomal subunit. Contacts proteins S9 and S11.

Functionally, one of the primary rRNA binding proteins, it binds directly to 16S rRNA where it nucleates assembly of the head domain of the 30S subunit. Is located at the subunit interface close to the decoding center, probably blocks exit of the E-site tRNA. This is Small ribosomal subunit protein uS7 from Francisella philomiragia subsp. philomiragia (strain ATCC 25017 / CCUG 19701 / FSC 153 / O#319-036).